The following is a 244-amino-acid chain: Gas vesicle protein F (244 aa).

This sequence belongs to the gas vesicle GvpF/GvpL family. As to quaternary structure, binds GvpA.

The protein resides in the gas vesicle. A minor component of the gas vesicle, may be involved in preventing GvpA aggregation during gas vesicle nucleation. Gas vesicles (GV) are hollow, gas filled proteinaceous nanostructures. During planktonic growth they allow positioning of the organism at a favorable depth for light or nutrient acquisition. Its function is as follows. Cluster expression in E.coli (gvpA1-gvpA2-gvpC-gvpN-gvpJ-gvpK-gvpF-gvpG-gvpV-gvpW) allows cells to float and produces irregularly shaped gas vesicles. This is Gas vesicle protein F from Nostoc sp. (strain PCC 7120 / SAG 25.82 / UTEX 2576).